Reading from the N-terminus, the 535-residue chain is Glucan 1,6-alpha-glucosidase (535 aa).

Residue Asp194 is the Nucleophile of the active site. The Proton donor role is filled by Glu236.

It belongs to the glycosyl hydrolase 13 family.

Its subcellular location is the cytoplasm. The enzyme catalyses Hydrolysis of (1-&gt;6)-alpha-D-glucosidic linkages in (1-&gt;6)-alpha-D-glucans and derived oligosaccharides.. Its function is as follows. The physiological substrates may be short isomaltosaccharides. The sequence is that of Glucan 1,6-alpha-glucosidase (dexB) from Streptococcus pneumoniae serotype 4 (strain ATCC BAA-334 / TIGR4).